Reading from the N-terminus, the 339-residue chain is Silicatein (339 aa).

Positions 1 to 18 (MAIVYGAILFQIILIACA) are cleaved as a signal peptide. A propeptide spanning residues 19–122 (EFPPEWHAWK…REYQAPATVS (104 aa)) is cleaved from the precursor. Leu-123 is subject to N,N-dimethylleucine; alternate. Leu-123 is subject to N-methylleucine; alternate. Ser-188 is subject to Phosphoserine. Residue Tyr-219 is modified to Phosphotyrosine. Residues His-286 and Asn-306 contribute to the active site. At Ser-335 the chain carries Phosphoserine.

Belongs to the peptidase C1 family. In terms of assembly, homodimer. Homodimerization occurs as a result of non-covalent interactions and not through disulfide linkages between the two monomers.

Its function is as follows. Polymerizes silica around the axial filament during spicule formation. In Petrosia ficiformis (Common Mediterranean sponge), this protein is Silicatein.